We begin with the raw amino-acid sequence, 209 residues long: Ubiquitin-conjugating enzyme E2 S (209 aa).

A UBC core domain is found at 14 to 160; sequence QTIRQVMREL…ARMMTEIHAQ (147 aa). Cys98 serves as the catalytic Glycyl thioester intermediate. Residues 165–194 form a disordered region; the sequence is GVGAASDAKDDDGPSTKKHAGLDKKLQDKK. A compositionally biased stretch (basic and acidic residues) spans 171-194; the sequence is DAKDDDGPSTKKHAGLDKKLQDKK.

Belongs to the ubiquitin-conjugating enzyme family.

It carries out the reaction S-ubiquitinyl-[E1 ubiquitin-activating enzyme]-L-cysteine + [E2 ubiquitin-conjugating enzyme]-L-cysteine = [E1 ubiquitin-activating enzyme]-L-cysteine + S-ubiquitinyl-[E2 ubiquitin-conjugating enzyme]-L-cysteine.. It participates in protein modification; protein ubiquitination. In terms of biological role, catalyzes the covalent attachment of ubiquitin to other proteins. Acts as an essential factor of the anaphase promoting complex/cyclosome (APC/C), a cell cycle-regulated ubiquitin ligase that controls progression through mitosis. Acts by specifically elongating polyubiquitin chains initiated by the E2 enzyme vih/UbcH10 on APC/C substrates, enhancing the degradation of APC/C substrates by the proteasome and promoting mitotic exit. The polypeptide is Ubiquitin-conjugating enzyme E2 S (Drosophila persimilis (Fruit fly)).